Consider the following 375-residue polypeptide: Probable disease resistance protein At1g52660 (375 aa).

Residues 158–372 enclose the NB-ARC domain; the sequence is ENTGIIGLYG…LSNSPPNFSG (215 aa). An ATP-binding site is contributed by 167 to 174; the sequence is GVEGVGKT.

Possible disease resistance protein. The sequence is that of Probable disease resistance protein At1g52660 from Arabidopsis thaliana (Mouse-ear cress).